A 599-amino-acid polypeptide reads, in one-letter code: Beta-myrcene synthase, chloroplastic (599 aa).

The N-terminal 34 residues, M1–V34, are a transit peptide targeting the chloroplast. Residues D352, D356, D496, T500, and E504 each contribute to the Mg(2+) site. Positions D352–D356 match the DDXXD motif motif.

It belongs to the terpene synthase family. Mg(2+) is required as a cofactor. The cofactor is Mn(2+).

The protein resides in the plastid. It localises to the chloroplast. It carries out the reaction (2E)-geranyl diphosphate = beta-myrcene + diphosphate. It functions in the pathway secondary metabolite biosynthesis; terpenoid biosynthesis. Functionally, monoterpene synthase that catalyzes the formation of beta-myrcene from geranyl diphosphate. This Ocimum basilicum (Sweet basil) protein is Beta-myrcene synthase, chloroplastic (MYS).